The chain runs to 276 residues: 3,4-dihydroxyphenylacetate 2,3-dioxygenase (276 aa).

Fe cation is required as a cofactor.

The catalysed reaction is 3,4-dihydroxyphenylacetate + O2 = 2-hydroxy-5-carboxymethylmuconate semialdehyde + H(+). Its pathway is aromatic compound metabolism; 4-hydroxyphenylacetate degradation; pyruvate and succinate semialdehyde from 4-hydroxyphenylacetate: step 2/7. In terms of biological role, transforms homoprotocatechuic acid (HPC) into 5-carboxymethyl-2-hydroxy-muconic semialdehyde (CHMS). This Escherichia coli protein is 3,4-dihydroxyphenylacetate 2,3-dioxygenase (hpcB).